We begin with the raw amino-acid sequence, 494 residues long: Guanosine-5'-triphosphate,3'-diphosphate pyrophosphatase (494 aa).

It belongs to the GppA/Ppx family. GppA subfamily.

It catalyses the reaction guanosine 3'-diphosphate 5'-triphosphate + H2O = guanosine 3',5'-bis(diphosphate) + phosphate + H(+). It functions in the pathway purine metabolism; ppGpp biosynthesis; ppGpp from GTP: step 2/2. Its function is as follows. Catalyzes the conversion of pppGpp to ppGpp. Guanosine pentaphosphate (pppGpp) is a cytoplasmic signaling molecule which together with ppGpp controls the 'stringent response', an adaptive process that allows bacteria to respond to amino acid starvation, resulting in the coordinated regulation of numerous cellular activities. The sequence is that of Guanosine-5'-triphosphate,3'-diphosphate pyrophosphatase from Citrobacter koseri (strain ATCC BAA-895 / CDC 4225-83 / SGSC4696).